The primary structure comprises 543 residues: ATP synthase subunit alpha (543 aa).

174–181 (GDRQTGKT) contributes to the ATP binding site.

This sequence belongs to the ATPase alpha/beta chains family. As to quaternary structure, F-type ATPases have 2 components, CF(1) - the catalytic core - and CF(0) - the membrane proton channel. CF(1) has five subunits: alpha(3), beta(3), gamma(1), delta(1), epsilon(1). CF(0) has three main subunits: a(1), b(2) and c(9-12). The alpha and beta chains form an alternating ring which encloses part of the gamma chain. CF(1) is attached to CF(0) by a central stalk formed by the gamma and epsilon chains, while a peripheral stalk is formed by the delta and b chains.

Its subcellular location is the cell membrane. It catalyses the reaction ATP + H2O + 4 H(+)(in) = ADP + phosphate + 5 H(+)(out). Functionally, produces ATP from ADP in the presence of a proton gradient across the membrane. The alpha chain is a regulatory subunit. This chain is ATP synthase subunit alpha, found in Bifidobacterium longum subsp. infantis (strain ATCC 15697 / DSM 20088 / JCM 1222 / NCTC 11817 / S12).